The chain runs to 97 residues: uncharacterized protein (97 aa).

Positions methionine 1–aspartate 24 are enriched in basic and acidic residues. Positions methionine 1 to aspartate 97 are disordered. The segment covering serine 31–glutamine 43 has biased composition (low complexity). The segment covering threonine 44–threonine 53 has biased composition (basic and acidic residues).

This is an uncharacterized protein from Bacillus subtilis (strain 168).